We begin with the raw amino-acid sequence, 117 residues long: uncharacterized protein (117 aa).

Residues 57-77 (LGFPLGLLVFLHSLIVARFFV) form a helical membrane-spanning segment.

The protein resides in the membrane. This is an uncharacterized protein from Schizosaccharomyces pombe (strain 972 / ATCC 24843) (Fission yeast).